Reading from the N-terminus, the 304-residue chain is Pyridoxal 5'-phosphate synthase subunit PdxS (304 aa).

Asp34 lines the D-ribose 5-phosphate pocket. Lys91 acts as the Schiff-base intermediate with D-ribose 5-phosphate in catalysis. Gly163 serves as a coordination point for D-ribose 5-phosphate. Arg175 provides a ligand contact to D-glyceraldehyde 3-phosphate. D-ribose 5-phosphate-binding positions include Gly224 and 245-246 (GS).

Belongs to the PdxS/SNZ family. As to quaternary structure, in the presence of PdxT, forms a dodecamer of heterodimers.

It carries out the reaction aldehydo-D-ribose 5-phosphate + D-glyceraldehyde 3-phosphate + L-glutamine = pyridoxal 5'-phosphate + L-glutamate + phosphate + 3 H2O + H(+). The protein operates within cofactor biosynthesis; pyridoxal 5'-phosphate biosynthesis. Catalyzes the formation of pyridoxal 5'-phosphate from ribose 5-phosphate (RBP), glyceraldehyde 3-phosphate (G3P) and ammonia. The ammonia is provided by the PdxT subunit. Can also use ribulose 5-phosphate and dihydroxyacetone phosphate as substrates, resulting from enzyme-catalyzed isomerization of RBP and G3P, respectively. This Streptomyces avermitilis (strain ATCC 31267 / DSM 46492 / JCM 5070 / NBRC 14893 / NCIMB 12804 / NRRL 8165 / MA-4680) protein is Pyridoxal 5'-phosphate synthase subunit PdxS.